The chain runs to 494 residues: Cytochrome P450 2C44 (494 aa).

The first 25 residues, 1–25, serve as a signal peptide directing secretion; sequence MELLGLPTLALLVLVMSLSLLSVWT. At serine 131 the chain carries Phosphoserine. N6-acetyllysine occurs at positions 253 and 379. Cysteine 439 is a heme binding site.

This sequence belongs to the cytochrome P450 family. The cofactor is heme. As to expression, highly expressed in liver, particularly in hepatocytes and bile duct epithelial cells (at protein level). Expressed in nephron segments. Prominent expression is detected in proximal tubules at the corticomedullary junction (at protein level). Also expressed in renal cortical collecting duct. Lower expression levels are detected in adrenal glands.

It localises to the endoplasmic reticulum membrane. Its subcellular location is the microsome membrane. It carries out the reaction (5Z,8Z,11Z,14Z)-eicosatetraenoate + reduced [NADPH--hemoprotein reductase] + O2 = (8R,9S)-epoxy-(5Z,11Z,14Z)-eicosatrienoate + oxidized [NADPH--hemoprotein reductase] + H2O + H(+). The catalysed reaction is (5Z,8Z,11Z,14Z)-eicosatetraenoate + reduced [NADPH--hemoprotein reductase] + O2 = (11R,12S)-epoxy-(5Z,8Z,14Z)-eicosatrienoate + oxidized [NADPH--hemoprotein reductase] + H2O + H(+). It catalyses the reaction (5Z,8Z,11Z,14Z)-eicosatetraenoate + reduced [NADPH--hemoprotein reductase] + O2 = 14,15-epoxy-(5Z,8Z,11Z)-eicosatrienoate + oxidized [NADPH--hemoprotein reductase] + H2O + H(+). The enzyme catalyses (5Z,8Z,11Z,14Z,17Z)-eicosapentaenoate + reduced [NADPH--hemoprotein reductase] + O2 = 8,9-epoxy-(5Z,11Z,14Z,17Z)-eicosatetraenoate + oxidized [NADPH--hemoprotein reductase] + H2O + H(+). It carries out the reaction (5Z,8Z,11Z,14Z,17Z)-eicosapentaenoate + reduced [NADPH--hemoprotein reductase] + O2 = 11,12-epoxy-(5Z,8Z,14Z,17Z)-eicosatetraenoate + oxidized [NADPH--hemoprotein reductase] + H2O + H(+). The catalysed reaction is (5Z,8Z,11Z,14Z,17Z)-eicosapentaenoate + reduced [NADPH--hemoprotein reductase] + O2 = 14,15-epoxy-(5Z,8Z,11Z,17Z)-eicosatetraenoate + oxidized [NADPH--hemoprotein reductase] + H2O + H(+). It catalyses the reaction (5Z,8Z,11Z,14Z,17Z)-eicosapentaenoate + reduced [NADPH--hemoprotein reductase] + O2 = (17R,18S)-epoxy-(5Z,8Z,11Z,14Z)-eicosatetraenoate + oxidized [NADPH--hemoprotein reductase] + H2O + H(+). The enzyme catalyses (5Z,8Z,11Z,14Z,17Z)-eicosapentaenoate + reduced [NADPH--hemoprotein reductase] + O2 = (17S,18R)-epoxy-(5Z,8Z,11Z,14Z)-eicosatetraenoate + oxidized [NADPH--hemoprotein reductase] + H2O + H(+). It carries out the reaction 20-hydroxy-(5Z,8Z,11Z,14Z)-eicosatetraenoate + reduced [NADPH--hemoprotein reductase] + O2 = 20-hydroxy-8,9-epoxy-(5Z,11Z,14Z)-eicosatrienoate + oxidized [NADPH--hemoprotein reductase] + H2O + H(+). The protein operates within lipid metabolism; arachidonate metabolism. Functionally, a cytochrome P450 monooxygenase involved in polyunsaturated fatty acids (PUFAs) metabolism and signaling. Catalyzes preferentially the epoxidation of double bonds of PUFAs. Converts arachidonic acid (ARA, C20:4(n-6)) primarily to stereospecific products 8R,9S-epoxyeicosatrienoate (EET) and 11R,12S-EET. Plays a major role in the formation of EETs and hydroxy-EETs (HEETs) in kidney. Via EETs may inhibit the epithelial sodium channels (ENaCs) in nephron segments, preventing excessive sodium absorption during high dietary salt intake. Participates in the formation of anti-inflammatory hydroxyepoxyeicosatrienoic acids (HEETs) by converting 20-hydroxyeicosatetraenoic acid (20-HETE) to 20,8,9-HEET, an activator of PPARA. Metabolizes eicosapentaenoic acid (EPA, C20:5(n-3)) to epoxyeicosatetraenoic acid (EETeTr) regioisomers, 8,9-, 11,12-, 14,15-, and 17,18- EETeTr, preferentially producing 17R,18S enantiomer. Mechanistically, uses molecular oxygen inserting one oxygen atom into a substrate, and reducing the second into a water molecule, with two electrons provided by NADPH via cytochrome P450 reductase (CPR; NADPH-ferrihemoprotein reductase). The sequence is that of Cytochrome P450 2C44 from Mus musculus (Mouse).